The primary structure comprises 237 residues: DNA repair protein RecO (237 aa).

It belongs to the RecO family.

Its function is as follows. Involved in DNA repair and RecF pathway recombination. The sequence is that of DNA repair protein RecO from Rickettsia felis (strain ATCC VR-1525 / URRWXCal2) (Rickettsia azadi).